Reading from the N-terminus, the 474-residue chain is Trehalose-6-phosphate synthase (474 aa).

Arg10 contacts D-glucose 6-phosphate. Residue 22-23 (GG) participates in UDP-alpha-D-glucose binding. Residues Tyr77 and Asp131 each contribute to the D-glucose 6-phosphate site. The UDP-alpha-D-glucose site is built by Arg263 and Lys268. A D-glucose 6-phosphate-binding site is contributed by Arg301. UDP-alpha-D-glucose-binding positions include Phe340 and 366–370 (LVAKE).

Belongs to the glycosyltransferase 20 family. In terms of assembly, homotetramer.

The enzyme catalyses D-glucose 6-phosphate + UDP-alpha-D-glucose = alpha,alpha-trehalose 6-phosphate + UDP + H(+). It participates in glycan biosynthesis; trehalose biosynthesis. Probably involved in the osmoprotection via the biosynthesis of trehalose. Catalyzes the transfer of glucose from UDP-alpha-D-glucose (UDP-Glc) to D-glucose 6-phosphate (Glc-6-P) to form trehalose-6-phosphate. Acts with retention of the anomeric configuration of the UDP-sugar donor. The protein is Trehalose-6-phosphate synthase of Enterobacter sp. (strain 638).